A 39-amino-acid chain; its full sequence is Photosystem II reaction center protein J (39 aa).

The chain crosses the membrane as a helical span at residues 7–27; sequence IPLWIVAVVAGMGVIAVVGIF.

This sequence belongs to the PsbJ family. As to quaternary structure, PSII is composed of 1 copy each of membrane proteins PsbA, PsbB, PsbC, PsbD, PsbE, PsbF, PsbH, PsbI, PsbJ, PsbK, PsbL, PsbM, PsbT, PsbX, PsbY, PsbZ, Psb30/Ycf12, peripheral proteins PsbO, CyanoQ (PsbQ), PsbU, PsbV and a large number of cofactors. It forms dimeric complexes.

The protein localises to the cellular thylakoid membrane. Its function is as follows. This protein is a component of the reaction center of photosystem II. Functionally, one of the components of the core complex of photosystem II (PSII). PSII is a light-driven water:plastoquinone oxidoreductase that uses light energy to abstract electrons from H(2)O, generating O(2) and a proton gradient subsequently used for ATP formation. It consists of a core antenna complex that captures photons, and an electron transfer chain that converts photonic excitation into a charge separation. The sequence is that of Photosystem II reaction center protein J from Picosynechococcus sp. (strain ATCC 27264 / PCC 7002 / PR-6) (Agmenellum quadruplicatum).